The primary structure comprises 91 residues: Small ribosomal subunit protein uS19 (91 aa).

This sequence belongs to the universal ribosomal protein uS19 family.

Its function is as follows. Protein S19 forms a complex with S13 that binds strongly to the 16S ribosomal RNA. The chain is Small ribosomal subunit protein uS19 from Prochlorococcus marinus (strain NATL1A).